Consider the following 59-residue polypeptide: Single-pass membrane and coiled-coil domain-containing protein 4 (59 aa).

The tract at residues M1–M23 is disordered. Positions K9 to A22 are enriched in basic and acidic residues. A coiled-coil region spans residues K9 to T31. Residues T32–A52 traverse the membrane as a helical segment.

Belongs to the SMCO4 family.

It is found in the membrane. The chain is Single-pass membrane and coiled-coil domain-containing protein 4 (Smco4) from Mus musculus (Mouse).